Consider the following 238-residue polypeptide: Fatty acid metabolism regulator protein (238 aa).

In terms of domain architecture, HTH gntR-type spans 6–74; sequence KGPASFAEKY…HGKPTRVNNF (69 aa). The H-T-H motif DNA-binding region spans 34-53; sequence ERELSELIGVTRTTLREVLQ.

As to quaternary structure, homodimer.

Its subcellular location is the cytoplasm. Its function is as follows. Multifunctional regulator of fatty acid metabolism. The protein is Fatty acid metabolism regulator protein of Shewanella putrefaciens (strain CN-32 / ATCC BAA-453).